Reading from the N-terminus, the 279-residue chain is Reaction center protein L chain (279 aa).

Helical transmembrane passes span 33–56 (GFFG…GASQ), 85–113 (GLWQ…RKLG), and 116–141 (YHVP…ILMG). Histidine 154 and histidine 174 together coordinate (7R,8Z)-bacteriochlorophyll b. A helical membrane pass occupies residues 171–200 (NPAHMLAITFFFTTTLAMSMHGGLILSAAN). Position 191 (histidine 191) interacts with Fe cation. Phenylalanine 217 is an a ubiquinone binding site. A helical membrane pass occupies residues 226–252 (GSLGIHRLGLFLALSAAFWSAVCIVIS). Histidine 231 serves as a coordination point for Fe cation.

This sequence belongs to the reaction center PufL/M/PsbA/D family. In terms of assembly, reaction center is composed of four bacteriochlorophylls, two bacteriopheophytins, two ubiquinones, one iron, and three highly hydrophobic polypeptide chains (designated L, M, and H).

Its subcellular location is the cell inner membrane. Its function is as follows. The reaction center is a membrane-bound complex that mediates the initial photochemical event in the electron transfer process of photosynthesis. The sequence is that of Reaction center protein L chain (pufL) from Rubrivivax gelatinosus (Rhodocyclus gelatinosus).